A 332-amino-acid chain; its full sequence is Biotin synthase (332 aa).

Residues 53-282 form the Radical SAM core domain; it reads HFGKKVKLNM…TKEIRISGGR (230 aa). Residues Cys-71, Cys-75, and Cys-78 each coordinate [4Fe-4S] cluster. Cys-115, Cys-147, Cys-207, and Arg-277 together coordinate [2Fe-2S] cluster.

This sequence belongs to the radical SAM superfamily. Biotin synthase family. In terms of assembly, homodimer. [4Fe-4S] cluster serves as cofactor. Requires [2Fe-2S] cluster as cofactor.

It carries out the reaction (4R,5S)-dethiobiotin + (sulfur carrier)-SH + 2 reduced [2Fe-2S]-[ferredoxin] + 2 S-adenosyl-L-methionine = (sulfur carrier)-H + biotin + 2 5'-deoxyadenosine + 2 L-methionine + 2 oxidized [2Fe-2S]-[ferredoxin]. It functions in the pathway cofactor biosynthesis; biotin biosynthesis; biotin from 7,8-diaminononanoate: step 2/2. Functionally, catalyzes the conversion of dethiobiotin (DTB) to biotin by the insertion of a sulfur atom into dethiobiotin via a radical-based mechanism. This chain is Biotin synthase, found in Bacillus cereus (strain G9842).